The following is a 143-amino-acid chain: Peptide methionine sulfoxide reductase MsrB (143 aa).

The 124-residue stretch at 16 to 139 (DAELRRRLTP…NSAALNFEAK (124 aa)) folds into the MsrB domain. Zn(2+) contacts are provided by Cys-55, Cys-58, Cys-104, and Cys-107. The active-site Nucleophile is Cys-128.

It belongs to the MsrB Met sulfoxide reductase family. Zn(2+) serves as cofactor.

It catalyses the reaction L-methionyl-[protein] + [thioredoxin]-disulfide + H2O = L-methionyl-(R)-S-oxide-[protein] + [thioredoxin]-dithiol. This Burkholderia thailandensis (strain ATCC 700388 / DSM 13276 / CCUG 48851 / CIP 106301 / E264) protein is Peptide methionine sulfoxide reductase MsrB.